Consider the following 293-residue polypeptide: N-acetylneuraminate lyase (293 aa).

The aceneuramate site is built by Ser-48 and Ser-49. Tyr-137 functions as the Proton donor in the catalytic mechanism. The active-site Schiff-base intermediate with substrate is Lys-165. Positions 167, 189, 191, 192, and 208 each coordinate aceneuramate.

Belongs to the DapA family. NanA subfamily. Homotetramer.

It is found in the cytoplasm. The catalysed reaction is aceneuramate = aldehydo-N-acetyl-D-mannosamine + pyruvate. It participates in amino-sugar metabolism; N-acetylneuraminate degradation; D-fructose 6-phosphate from N-acetylneuraminate: step 1/5. In terms of biological role, catalyzes the reversible aldol cleavage of N-acetylneuraminic acid (sialic acid; Neu5Ac) to form pyruvate and N-acetylmannosamine (ManNAc) via a Schiff base intermediate. This chain is N-acetylneuraminate lyase, found in Staphylococcus aureus (strain bovine RF122 / ET3-1).